The primary structure comprises 142 residues: Hemoglobin F-I (142 aa).

Residues 2 to 142 enclose the Globin domain; that stretch reads GLTTAQIKAI…AAGVLVAAMK (141 aa). His95 contacts heme b.

Belongs to the globin family. In terms of assembly, homotetramer.

Hemoglobin F-I appears to function in storage, rather than transport of oxygen. The polypeptide is Hemoglobin F-I (Urechis caupo (Innkeeper worm)).